The chain runs to 222 residues: 26S proteasome non-ATPase regulatory subunit 9 (222 aa).

A PDZ domain is found at 108 to 194; sequence QARDMAEARE…KPLNVTVIRR (87 aa). Ser128 carries the phosphoserine modification.

It belongs to the proteasome subunit p27 family. Interacts with PSMC3. Part of a transient complex (modulator) containing PSMD9, PSMC6 and PSMC3 formed during the assembly of the 26S proteasome.

Its function is as follows. Acts as a chaperone during the assembly of the 26S proteasome, specifically of the base subcomplex of the PA700/19S regulatory complex (RC). During the base subcomplex assembly is part of an intermediate PSMD9:PSMC6:PSMC3 module, also known as modulator trimer complex; PSMD9 is released during the further base assembly process. This is 26S proteasome non-ATPase regulatory subunit 9 (Psmd9) from Mus musculus (Mouse).